A 185-amino-acid chain; its full sequence is Ubiquitin-conjugating enzyme E2 5 (185 aa).

The UBC core domain occupies 1 to 148 (MSSPSKRREM…VKEYCEKYAK (148 aa)). The active-site Glycyl thioester intermediate is C85. The interval 146–185 (YAKPRADTEEMSSDDEMSEDEYASDGDDEDDVAIAGKLDP) is disordered. Residues 154–177 (EEMSSDDEMSEDEYASDGDDEDDV) show a composition bias toward acidic residues.

The protein belongs to the ubiquitin-conjugating enzyme family. Expressed in developing ovules, but not in vascular tissues.

It carries out the reaction S-ubiquitinyl-[E1 ubiquitin-activating enzyme]-L-cysteine + [E2 ubiquitin-conjugating enzyme]-L-cysteine = [E1 ubiquitin-activating enzyme]-L-cysteine + S-ubiquitinyl-[E2 ubiquitin-conjugating enzyme]-L-cysteine.. It functions in the pathway protein modification; protein ubiquitination. In terms of biological role, accepts the ubiquitin from the E1 complex and catalyzes its covalent attachment to other proteins. This chain is Ubiquitin-conjugating enzyme E2 5 (UBC5), found in Arabidopsis thaliana (Mouse-ear cress).